We begin with the raw amino-acid sequence, 346 residues long: NSSLPTNISGGTPAVSAGYLFLDIITYLVFAVTFVLGVLGNGLVIWVAGFRMTHTVTTISYLNLAVADFCFTSTLPFFMVRKAMGGHWPFGWFLCKFIFTIVDINLFGSVFLIALIALDRCVCVLHPVWTQNHRTVSLAKKVIIGPWVMALLLTLPVIIRVTTVPGKTGTVACTFNFSPWTNDPKERINVAIAMLTVRGIIRFIIGFSAPMSIVAVSYGLIATKIHKQGLIKFSRPLRVLSFVAAAFFLCWSPYQVVALIATVRIRELLQGMYKEIGIAVDVTSALAFFNSCLNPMLYVFMGQDFRERLIHALPASLERALTEDSTQTSDTATNSTLPSAEVALQA.

N-linked (GlcNAc...) asparagine glycans are attached at residues Asn1 and Asn7. Residues 1–24 (NSSLPTNISGGTPAVSAGYLFLDI) are Extracellular-facing. The chain crosses the membrane as a helical span at residues 25–47 (ITYLVFAVTFVLGVLGNGLVIWV). The Cytoplasmic segment spans residues 48 to 58 (AGFRMTHTVTT). A helical membrane pass occupies residues 59-80 (ISYLNLAVADFCFTSTLPFFMV). The Extracellular portion of the chain corresponds to 81–97 (RKAMGGHWPFGWFLCKF). Cys95 and Cys173 are oxidised to a cystine. The helical transmembrane segment at 98-118 (IFTIVDINLFGSVFLIALIAL) threads the bilayer. At 119-137 (DRCVCVLHPVWTQNHRTVS) the chain is on the cytoplasmic side. A helical membrane pass occupies residues 138 to 159 (LAKKVIIGPWVMALLLTLPVII). The Extracellular portion of the chain corresponds to 160–202 (RVTTVPGKTGTVACTFNFSPWTNDPKERINVAIAMLTVRGIIR). A helical transmembrane segment spans residues 203 to 223 (FIIGFSAPMSIVAVSYGLIAT). The Cytoplasmic portion of the chain corresponds to 224 to 239 (KIHKQGLIKFSRPLRV). The helical transmembrane segment at 240 to 263 (LSFVAAAFFLCWSPYQVVALIATV) threads the bilayer. Residues 264–282 (RIRELLQGMYKEIGIAVDV) lie on the Extracellular side of the membrane. Residues 283–302 (TSALAFFNSCLNPMLYVFMG) form a helical membrane-spanning segment. At 303–346 (QDFRERLIHALPASLERALTEDSTQTSDTATNSTLPSAEVALQA) the chain is on the cytoplasmic side. Residues 322–346 (TEDSTQTSDTATNSTLPSAEVALQA) are disordered. The segment covering 323-338 (EDSTQTSDTATNSTLP) has biased composition (polar residues).

Belongs to the G-protein coupled receptor 1 family. Post-translationally, phosphorylated; which is necessary for desensitization.

Its subcellular location is the cell membrane. Its function is as follows. High affinity receptor for N-formyl-methionyl peptides (fMLP), which are powerful neutrophil chemotactic factors. Binding of fMLP to the receptor stimulates intracellular calcium mobilization and superoxide anion release. This response is mediated via a G-protein that activates a phosphatidylinositol-calcium second messenger system. Receptor for TAFA4, mediates its effects on chemoattracting macrophages, promoting phagocytosis and increasing ROS release. Receptor for cathepsin CTSG, leading to increased phagocyte chemotaxis. This chain is fMet-Leu-Phe receptor (FPR1), found in Pan troglodytes (Chimpanzee).